The chain runs to 211 residues: FMN-dependent NADH:quinone oxidoreductase (211 aa).

FMN is bound by residues serine 10, 16–18, and 138–141; these read STS and TQGG.

This sequence belongs to the azoreductase type 1 family. In terms of assembly, homodimer. FMN is required as a cofactor.

The catalysed reaction is 2 a quinone + NADH + H(+) = 2 a 1,4-benzosemiquinone + NAD(+). It catalyses the reaction N,N-dimethyl-1,4-phenylenediamine + anthranilate + 2 NAD(+) = 2-(4-dimethylaminophenyl)diazenylbenzoate + 2 NADH + 2 H(+). Functionally, quinone reductase that provides resistance to thiol-specific stress caused by electrophilic quinones. In terms of biological role, also exhibits azoreductase activity. Catalyzes the reductive cleavage of the azo bond in aromatic azo compounds to the corresponding amines. In Frankia alni (strain DSM 45986 / CECT 9034 / ACN14a), this protein is FMN-dependent NADH:quinone oxidoreductase.